A 322-amino-acid polypeptide reads, in one-letter code: Ribosomal lysine N-methyltransferase 5 (322 aa).

Residues tryptophan 92, glycine 141–glycine 143, aspartate 163, tryptophan 214, and methionine 242 contribute to the S-adenosyl-L-methionine site.

The protein belongs to the class I-like SAM-binding methyltransferase superfamily. RKM5 family.

In terms of biological role, S-adenosyl-L-methionine-dependent protein-lysine N-methyltransferase that methylates 60S ribosomal protein L1. This chain is Ribosomal lysine N-methyltransferase 5 (RKM5), found in Kluyveromyces lactis (strain ATCC 8585 / CBS 2359 / DSM 70799 / NBRC 1267 / NRRL Y-1140 / WM37) (Yeast).